We begin with the raw amino-acid sequence, 278 residues long: Large ribosomal subunit protein uL2 (278 aa).

Disordered regions lie at residues 29–55 and 225–278; these read PEKS…RHQG and VMNP…NKKR. Basic residues predominate over residues 258–278; it reads RSNKKASNKYIVRRRTKNKKR.

The protein belongs to the universal ribosomal protein uL2 family. Part of the 50S ribosomal subunit. Forms a bridge to the 30S subunit in the 70S ribosome. The N-terminus is blocked. Post-translationally, phosphorylated on serine and threonine residues.

In terms of biological role, one of the primary rRNA binding proteins. Required for association of the 30S and 50S subunits to form the 70S ribosome, for tRNA binding and peptide bond formation. It has been suggested to have peptidyltransferase activity; this is somewhat controversial. Makes several contacts with the 16S rRNA in the 70S ribosome. This Streptomyces collinus protein is Large ribosomal subunit protein uL2.